Consider the following 414-residue polypeptide: Esterase FrsA (414 aa).

The protein belongs to the FrsA family.

It carries out the reaction a carboxylic ester + H2O = an alcohol + a carboxylate + H(+). In terms of biological role, catalyzes the hydrolysis of esters. This is Esterase FrsA from Escherichia coli O139:H28 (strain E24377A / ETEC).